Consider the following 464-residue polypeptide: Soluble pyridine nucleotide transhydrogenase (464 aa).

35–44 (DSRREVGGNC) contacts FAD.

It belongs to the class-I pyridine nucleotide-disulfide oxidoreductase family. FAD serves as cofactor.

It is found in the cytoplasm. The catalysed reaction is NAD(+) + NADPH = NADH + NADP(+). Functionally, conversion of NADPH, generated by peripheral catabolic pathways, to NADH, which can enter the respiratory chain for energy generation. The polypeptide is Soluble pyridine nucleotide transhydrogenase (Pseudomonas syringae pv. tomato (strain ATCC BAA-871 / DC3000)).